The following is an 817-amino-acid chain: Dynamin-related protein 5A (817 aa).

Over residues methionine 1–asparagine 20 the composition is skewed to polar residues. The disordered stretch occupies residues methionine 1–alanine 37. The Dynamin-type G domain occupies lysine 59–proline 346. The interval glycine 69–serine 76 is G1 motif. Glycine 69–serine 76 is a GTP binding site. The segment at glycine 95–arginine 97 is G2 motif. Residues aspartate 175–glycine 178 are G3 motif. Residues aspartate 175–phenylalanine 179 and serine 244–aspartate 247 each bind GTP. The interval serine 244 to aspartate 247 is G4 motif. The segment at leucine 280–aspartate 283 is G5 motif. Disordered stretches follow at residues alanine 405 to tryptophan 425 and leucine 616 to serine 658. Residues aspartate 618–glutamate 629 show a composition bias toward basic and acidic residues.

Belongs to the TRAFAC class dynamin-like GTPase superfamily. Dynamin/Fzo/YdjA family. In terms of tissue distribution, expressed in root and leaf meristems.

It is found in the cytoplasm. The protein localises to the cytoskeleton. It localises to the phragmoplast. Its function is as follows. Probable microtubule-associated force-producing protein that is targeted to the forming cell plate during cytokinesis. May play a role in cell division. The sequence is that of Dynamin-related protein 5A (DRP5A) from Arabidopsis thaliana (Mouse-ear cress).